The primary structure comprises 199 residues: Peptidyl-tRNA hydrolase (199 aa).

Tyrosine 25 contacts tRNA. Histidine 30 (proton acceptor) is an active-site residue. TRNA-binding residues include tyrosine 76, asparagine 78, and asparagine 124.

It belongs to the PTH family. In terms of assembly, monomer.

Its subcellular location is the cytoplasm. It catalyses the reaction an N-acyl-L-alpha-aminoacyl-tRNA + H2O = an N-acyl-L-amino acid + a tRNA + H(+). In terms of biological role, hydrolyzes ribosome-free peptidyl-tRNAs (with 1 or more amino acids incorporated), which drop off the ribosome during protein synthesis, or as a result of ribosome stalling. Functionally, catalyzes the release of premature peptidyl moieties from peptidyl-tRNA molecules trapped in stalled 50S ribosomal subunits, and thus maintains levels of free tRNAs and 50S ribosomes. In Mycobacterium leprae (strain Br4923), this protein is Peptidyl-tRNA hydrolase.